The chain runs to 503 residues: Maturase K (503 aa).

This sequence belongs to the intron maturase 2 family. MatK subfamily.

The protein localises to the plastid. Its subcellular location is the chloroplast. In terms of biological role, usually encoded in the trnK tRNA gene intron. Probably assists in splicing its own and other chloroplast group II introns. The polypeptide is Maturase K (Rosa foetida (Austrian briar)).